The following is a 145-amino-acid chain: Photosystem I reaction center subunit VI-2, chloroplastic (145 aa).

The transit peptide at 1 to 50 (MASFATIAAVQPSAAVKGLGGSSLAGAKLFIKPSRQSFKTKSTRAGAVVA) directs the protein to the chloroplast. Residues 102–118 (LLLKFLILGGGSLLTYV) form a helical membrane-spanning segment. Positions 126-145 (VLPIKRGPQEPPKLGPRGKL) are disordered.

The protein belongs to the psaH family.

The protein resides in the plastid. It is found in the chloroplast thylakoid membrane. Possible role could be the docking of the LHC I antenna complex to the core complex. This Arabidopsis thaliana (Mouse-ear cress) protein is Photosystem I reaction center subunit VI-2, chloroplastic (PSAH2).